The chain runs to 208 residues: Interleukin-6 (208 aa).

The signal sequence occupies residues 1 to 29 (MNSRFTSAFTPFAVSLGLLLVMTSAFPTP). The N-linked (GlcNAc...) asparagine glycan is linked to Asn-38. An intrachain disulfide couples Cys-72 to Cys-78. The residue at position 81 (Ser-81) is a Phosphoserine. A disulfide bridge links Cys-101 with Cys-111.

This sequence belongs to the IL-6 superfamily. Component of a hexamer of two molecules each of IL6, IL6R and IL6ST; first binds to IL6R to associate with the signaling subunit IL6ST. Interacts with IL6R (via the N-terminal ectodomain); this interaction may be affected by IL6R-binding with SORL1, hence decreasing IL6 cis signaling. Interacts with SORL1 (via the N-terminal ectodomain); this interaction leads to IL6 internalization and lysosomal degradation. May form a trimeric complex with the soluble SORL1 ectodomain and soluble IL6R receptor; this interaction might stabilize circulating IL6, hence promoting IL6 trans signaling.

It is found in the secreted. Functionally, cytokine with a wide variety of biological functions in immunity, tissue regeneration, and metabolism. Binds to IL6R, then the complex associates to the signaling subunit IL6ST/gp130 to trigger the intracellular IL6-signaling pathway. The interaction with the membrane-bound IL6R and IL6ST stimulates 'classic signaling', whereas the binding of IL6 and soluble IL6R to IL6ST stimulates 'trans-signaling'. Alternatively, 'cluster signaling' occurs when membrane-bound IL6:IL6R complexes on transmitter cells activate IL6ST receptors on neighboring receiver cells. Its function is as follows. IL6 is a potent inducer of the acute phase response. Rapid production of IL6 contributes to host defense during infection and tissue injury, but excessive IL6 synthesis is involved in disease pathology. In the innate immune response, is synthesized by myeloid cells, such as macrophages and dendritic cells, upon recognition of pathogens through toll-like receptors (TLRs) at the site of infection or tissue injury. In the adaptive immune response, is required for the differentiation of B cells into immunoglobulin-secreting cells. Plays a major role in the differentiation of CD4(+) T cell subsets. Essential factor for the development of T follicular helper (Tfh) cells that are required for the induction of germinal-center formation. Required to drive naive CD4(+) T cells to the Th17 lineage. Also required for proliferation of myeloma cells and the survival of plasmablast cells. In terms of biological role, acts as an essential factor in bone homeostasis and on vessels directly or indirectly by induction of VEGF, resulting in increased angiogenesis activity and vascular permeability. Induces, through 'trans-signaling' and synergistically with IL1B and TNF, the production of VEGF. Involved in metabolic controls, is discharged into the bloodstream after muscle contraction increasing lipolysis and improving insulin resistance. 'Trans-signaling' in central nervous system also regulates energy and glucose homeostasis. Mediates, through GLP-1, crosstalk between insulin-sensitive tissues, intestinal L cells and pancreatic islets to adapt to changes in insulin demand. Also acts as a myokine. Plays a protective role during liver injury, being required for maintenance of tissue regeneration. Also has a pivotal role in iron metabolism by regulating HAMP/hepcidin expression upon inflammation or bacterial infection. Through activation of IL6ST-YAP-NOTCH pathway, induces inflammation-induced epithelial regeneration. The protein is Interleukin-6 (IL6) of Bubalus bubalis (Domestic water buffalo).